The following is a 219-amino-acid chain: MKVVLSLGGSVLSNESEKIREFAKTIESVAQQNQVFVVVGGGKLAREYIKRARELGASETFCDYIGIAATRLNAMLLISAIPSAAKKVPVDFMEAEELSKLYRVVVMGGTFPGHTTDATAALLAEFIKADVFINATNVDGVYSADPKSDTSAVKYDRLSPQQLVEIVSRSSAKAGTNVVIDLLAAKIIERSKIKTYVILGTPENIMKAVKGEAVGTVIA.

9 to 10 is a binding site for ATP; it reads GS. A UMP-binding site is contributed by glycine 41. ATP-binding residues include glycine 42 and arginine 46. UMP contacts are provided by residues aspartate 63 and 110 to 116; that span reads TFPGHTT. Threonine 136, asparagine 137, tyrosine 142, and aspartate 145 together coordinate ATP.

This sequence belongs to the UMP kinase family. In terms of assembly, homohexamer.

The protein localises to the cytoplasm. It carries out the reaction UMP + ATP = UDP + ADP. The protein operates within pyrimidine metabolism; CTP biosynthesis via de novo pathway; UDP from UMP (UMPK route): step 1/1. Its activity is regulated as follows. Inhibited by UTP. Functionally, catalyzes the reversible phosphorylation of UMP to UDP. The polypeptide is Uridylate kinase (Archaeoglobus fulgidus (strain ATCC 49558 / DSM 4304 / JCM 9628 / NBRC 100126 / VC-16)).